Reading from the N-terminus, the 302-residue chain is Mitochondrial adapter protein MCP1 (302 aa).

A disordered region spans residues 1-35 (MIKLHEVPPEPVDPASLPHDVNAHSPEGDGNPDKR). Topologically, residues 1–61 (MIKLHEVPPE…RFLWNCQKIS (61 aa)) are cytoplasmic. Positions 4–12 (LHEVPPEPV) match the PxP motif. The chain crosses the membrane as a helical span at residues 62-82 (VLPMALYFPLHAANTLITPAV). The Mitochondrial intermembrane segment spans residues 83–100 (SPDSAPDDVLMMVREILP). The helical transmembrane segment at 101-121 (SITTKLLVAGITLHVSAGVLL) threads the bilayer. Topologically, residues 122 to 173 (RIVNNWNKPRRNRHRHLKISAEQDLSQDSIGLTGGISGYLFGLYKTFRIPPQ) are cytoplasmic. Residues 174 to 194 (VISGYILVPVLIYHLLIMKWV) form a helical membrane-spanning segment. Residues 195–219 (PNSISTEVDFASIKQLLSSKNRWWK) are Mitochondrial intermembrane-facing. A helical membrane pass occupies residues 220–240 (WLGGLVPLAILLESGVYHIGS). Residues 241–258 (GLCRYFGVRKMTSRKKWS) are Cytoplasmic-facing. The chain crosses the membrane as a helical span at residues 259 to 276 (TAINLLTLVGFVSLIRLM). Topologically, residues 277 to 302 (KEDSTKLGPNQFESIFKKIRLLLHVN) are mitochondrial intermembrane.

In terms of assembly, interacts (via PxP motif) with VPS13 (via SHR-BD domain).

Its subcellular location is the mitochondrion outer membrane. Recruits the lipid transfer protein Vps13 to mitochondria thereby promoting vacuole-mitochondria contacts. Involved in mitochondrial lipid homeostasis. The protein is Mitochondrial adapter protein MCP1 of Saccharomyces cerevisiae (strain ATCC 204508 / S288c) (Baker's yeast).